The sequence spans 325 residues: Release factor glutamine methyltransferase (325 aa).

S-adenosyl-L-methionine is bound by residues 141–145 (GTGSG), D164, W193, and N207. 207–210 (NPPY) contacts substrate. The disordered stretch occupies residues 306 to 325 (LPPIHIDAKPSAPGNGPTKA).

This sequence belongs to the protein N5-glutamine methyltransferase family. PrmC subfamily.

The catalysed reaction is L-glutaminyl-[peptide chain release factor] + S-adenosyl-L-methionine = N(5)-methyl-L-glutaminyl-[peptide chain release factor] + S-adenosyl-L-homocysteine + H(+). Functionally, methylates the class 1 translation termination release factors RF1/PrfA and RF2/PrfB on the glutamine residue of the universally conserved GGQ motif. The chain is Release factor glutamine methyltransferase from Rhodospirillum rubrum (strain ATCC 11170 / ATH 1.1.1 / DSM 467 / LMG 4362 / NCIMB 8255 / S1).